We begin with the raw amino-acid sequence, 444 residues long: Glucoside xylosyltransferase 2 (444 aa).

Residues 1–4 (MKLR) lie on the Cytoplasmic side of the membrane. The helical; Signal-anchor for type II membrane protein transmembrane segment at 5 to 25 (SKAAALLLLALAVLLLALLSL) threads the bilayer. Residues 26–444 (RARRDPEPPG…IIHMGPNPMS (419 aa)) are Lumenal-facing. The tract at residues 31–101 (PEPPGFPARP…LARRPGETRS (71 aa)) is disordered. A compositionally biased stretch (basic residues) spans 68-83 (RSPRRQPPRLRPRAGR). Basic and acidic residues predominate over residues 87–101 (ASREKLARRPGETRS). N275 carries N-linked (GlcNAc...) asparagine glycosylation.

Belongs to the glycosyltransferase 8 family.

It is found in the membrane. It catalyses the reaction 3-O-(beta-D-glucosyl)-L-seryl-[EGF-like domain protein] + UDP-alpha-D-xylose = 3-O-[alpha-D-xylosyl-(1-&gt;3)-beta-D-glucosyl]-L-seryl-[EGF-like domain protein] + UDP + H(+). Glycosyltransferase which elongates the O-linked glucose attached to EGF-like repeats in the extracellular domain of Notch proteins by catalyzing the addition of xylose. This is Glucoside xylosyltransferase 2 (Gxylt2) from Mus musculus (Mouse).